The primary structure comprises 473 residues: Cysteine--tRNA ligase (473 aa).

Cysteine 28 is a binding site for Zn(2+). The short motif at 30–40 (MTVYDYCHLGH) is the 'HIGH' region element. Zn(2+) contacts are provided by cysteine 209, histidine 234, and glutamate 238. Residues 282 to 286 (KMSKS) carry the 'KMSKS' region motif. ATP is bound at residue lysine 285.

It belongs to the class-I aminoacyl-tRNA synthetase family. Monomer. It depends on Zn(2+) as a cofactor.

The protein resides in the cytoplasm. The enzyme catalyses tRNA(Cys) + L-cysteine + ATP = L-cysteinyl-tRNA(Cys) + AMP + diphosphate. The polypeptide is Cysteine--tRNA ligase (Neisseria gonorrhoeae (strain ATCC 700825 / FA 1090)).